We begin with the raw amino-acid sequence, 620 residues long: 1-deoxy-D-xylulose-5-phosphate synthase (620 aa).

Residues histidine 80 and 121 to 123 (GHS) each bind thiamine diphosphate. Aspartate 152 lines the Mg(2+) pocket. Residues 153 to 154 (GA), asparagine 181, tyrosine 288, and glutamate 370 contribute to the thiamine diphosphate site. Residue asparagine 181 coordinates Mg(2+).

This sequence belongs to the transketolase family. DXPS subfamily. Homodimer. Mg(2+) is required as a cofactor. The cofactor is thiamine diphosphate.

It catalyses the reaction D-glyceraldehyde 3-phosphate + pyruvate + H(+) = 1-deoxy-D-xylulose 5-phosphate + CO2. It functions in the pathway metabolic intermediate biosynthesis; 1-deoxy-D-xylulose 5-phosphate biosynthesis; 1-deoxy-D-xylulose 5-phosphate from D-glyceraldehyde 3-phosphate and pyruvate: step 1/1. Catalyzes the acyloin condensation reaction between C atoms 2 and 3 of pyruvate and glyceraldehyde 3-phosphate to yield 1-deoxy-D-xylulose-5-phosphate (DXP). The protein is 1-deoxy-D-xylulose-5-phosphate synthase of Shigella flexneri.